The sequence spans 188 residues: Elongation factor P (188 aa).

It belongs to the elongation factor P family.

The protein resides in the cytoplasm. The protein operates within protein biosynthesis; polypeptide chain elongation. Its function is as follows. Involved in peptide bond synthesis. Stimulates efficient translation and peptide-bond synthesis on native or reconstituted 70S ribosomes in vitro. Probably functions indirectly by altering the affinity of the ribosome for aminoacyl-tRNA, thus increasing their reactivity as acceptors for peptidyl transferase. The sequence is that of Elongation factor P from Flavobacterium johnsoniae (strain ATCC 17061 / DSM 2064 / JCM 8514 / BCRC 14874 / CCUG 350202 / NBRC 14942 / NCIMB 11054 / UW101) (Cytophaga johnsonae).